Here is an 895-residue protein sequence, read N- to C-terminus: uncharacterized protein (895 aa).

2–19 (NISVIGTGYVGLIQAVGL) provides a ligand contact to NAD(+). Residue Cys-261 is part of the active site. The DOD-type homing endonuclease domain occupies 468-614 (LIGYYLSEGW…LLILLQLLGI (147 aa)).

The protein belongs to the UDP-glucose/GDP-mannose dehydrogenase family. This protein undergoes a protein self splicing that involves a post-translational excision of the intervening region (intein) followed by peptide ligation.

This is an uncharacterized protein from Methanocaldococcus jannaschii (strain ATCC 43067 / DSM 2661 / JAL-1 / JCM 10045 / NBRC 100440) (Methanococcus jannaschii).